The primary structure comprises 1094 residues: Potassium-transporting ATPase alpha chain 2 (1094 aa).

Residues 1–21 (MAGGAHRADRATGEERKEGGG) are compositionally biased toward basic and acidic residues. Residues 1–37 (MAGGAHRADRATGEERKEGGGRWRAPHSPSPPGPRGC) are disordered. The span at 28 to 37 (SPSPPGPRGC) shows a compositional bias: pro residues. The Cytoplasmic segment spans residues 56–157 (RYCTLLLFQR…NALTPPKQTP (102 aa)). Residues 158-178 (EIIKFLKQMVGGFSILLWVGA) traverse the membrane as a helical segment. Topologically, residues 179–201 (VLCWIAFGIQYVSNPSASLDRVY) are lumenal. The helical transmembrane segment at 202 to 222 (LGTVLAVVVILTGIFAYYQEA) threads the bilayer. Residues 223–358 (KSTNIMASFC…NEKTPIAIEI (136 aa)) lie on the Cytoplasmic side of the membrane. The interval 286 to 305 (SSLTGESEPQSRSSGFTHEN) is disordered. The chain crosses the membrane as a helical span at residues 359–378 (EHFVHIVAGVAVSVGILFFI). Residues 379–390 (IAVCMKYHVLDA) lie on the Lumenal side of the membrane. Residues 391–408 (IIFLIAIIVANVPEGLLA) form a helical membrane-spanning segment. Topologically, residues 409–842 (TVTVALSLTA…EEGRLIFDNL (434 aa)) are cytoplasmic. Catalysis depends on Asp-446, which acts as the 4-aspartylphosphate intermediate. Asp-787 and Asp-791 together coordinate Mg(2+). The helical transmembrane segment at 843–862 (KKTIAYTLTKNIAELCPFLI) threads the bilayer. At 863–872 (YIILGLPLPI) the chain is on the lumenal side. The chain crosses the membrane as a helical span at residues 873-893 (GTITLLFIDLGTDIIPSIALA). The Cytoplasmic segment spans residues 894–913 (YEKAESDIMNRKPRHKKKDR). A helical transmembrane segment spans residues 914–936 (LVNQQLAVYSYLHIGLMQALGAF). Over 937-988 (LVYFTVYAQQGFRPTSLFHLRIAWDSDHLNDLEDNYGQEWTSYQRQYLEWTG) the chain is Lumenal. Residues 989–1008 (YTAFFVGIMVQQIADLIIRK) form a helical membrane-spanning segment. The Cytoplasmic segment spans residues 1009 to 1022 (TRKNSIFKQGLFRN). Ser-1013 is subject to Phosphoserine; by PKA. Residues 1023–1041 (KVIWVGIASQIIVALLLSY) form a helical membrane-spanning segment. Residues 1042-1056 (GLGSITALNFTMLKA) are Lumenal-facing. A helical transmembrane segment spans residues 1057 to 1077 (QYWFVAVPHAILIWVYDEMRK). The Cytoplasmic portion of the chain corresponds to 1078–1094 (LFIRLYPGSWWDKNMYY).

This sequence belongs to the cation transport ATPase (P-type) (TC 3.A.3) family. Type IIC subfamily. As to quaternary structure, the X(+)/K(+) ATPase pump is composed of a catalytic alpha subunit and an auxiliary non-catalytic beta subunit. The alpha subunit pairs with the beta subunit of gastric H(+)/K(+) ATPase ATP4B or the beta subunit of Na(+)/K(+) ATPases ATP1B1 and ATP1B3; this interaction is required for the formation of a functionally active pump and its targeting at the plasma membrane. As to expression, found in the skin, kidney, distal colon and brain. In the kidney it is found in the connecting tubule, cortical collecting duct and outer medullary collecting duct while in the brain it is specific to choroid plexus and cortex.

The protein resides in the apical cell membrane. The enzyme catalyses K(+)(out) + ATP + H2O + H(+)(in) = K(+)(in) + ADP + phosphate + 2 H(+)(out). The catalysed reaction is K(+)(out) + Na(+)(in) + ATP + H2O = K(+)(in) + Na(+)(out) + ADP + phosphate + H(+). In terms of biological role, the catalytic subunit of a H(+)/K(+) ATPase and/or Na(+)/K(+) ATPase pump which transports K(+) ions in exchange for Na(+) and/or H(+) ions across the apical membrane of epithelial cells. Uses ATP as an energy source to pump K(+) ions into the cell while transporting Na(+) and/or H(+) ions to the extracellular compartment. Involved in the maintenance of electrolyte homeostasis through K(+) ion absorption in kidney and colon. In the airway epithelium, may play a primary role in mucus acidification regulating its viscosity and clearance. This chain is Potassium-transporting ATPase alpha chain 2 (ATP12A), found in Oryctolagus cuniculus (Rabbit).